Here is a 938-residue protein sequence, read N- to C-terminus: Glutamate receptor ionotropic, NMDA 1 (938 aa).

The first 18 residues, 1 to 18 (MSTMRLLTLALLFSCSVA), serve as a signal peptide directing secretion. At 19–559 (RAACDPKIVN…TLDSFMQPFQ (541 aa)) the chain is on the extracellular side. N-linked (GlcNAc...) asparagine glycans are attached at residues asparagine 61, asparagine 203, asparagine 239, asparagine 276, asparagine 300, asparagine 350, asparagine 368, asparagine 440, asparagine 471, and asparagine 491. Cysteine 79 and cysteine 308 are disulfide-bonded. Intrachain disulfides connect cysteine 420–cysteine 454 and cysteine 436–cysteine 455. Residues proline 516, threonine 518, and arginine 523 each coordinate glycine. A helical transmembrane segment spans residues 560–580 (STLWLLVGLSVHVVAVMLYLL). Topologically, residues 581–604 (DRFSPFGRFKVNSEEEEEDALTLS) are cytoplasmic. The pore-forming stretch occupies residues 603–624 (LSSAMWFSWGVLLNSGIGEGAP). The discontinuously helical intramembrane region spans 605-615 (SAMWFSWGVLL). Residues 616-627 (NSGIGEGAPRSF) are Cytoplasmic-facing. The chain crosses the membrane as a helical span at residues 628–648 (SARILGMVWAGFAMIIVASYT). Residues 649–811 (ANLAAFLVLD…SNAPATLTFE (163 aa)) are Extracellular-facing. Asparagine 674 is a glycosylation site (N-linked (GlcNAc...) asparagine). Glycine contacts are provided by serine 688 and aspartate 732. Cysteine 744 and cysteine 798 are joined by a disulfide. A glycan (N-linked (GlcNAc...) asparagine) is linked at asparagine 771. A helical membrane pass occupies residues 812–835 (NMAGVFMLVAGGIVAGIFLIFIEI). Over 836–938 (AYKRHKDARR…LQLCSRHRES (103 aa)) the chain is Cytoplasmic. Serine 889, serine 890, serine 896, and serine 897 each carry phosphoserine; by PKC. A disordered region spans residues 889 to 938 (SSFKRRRSSKDTSTGGGRGALQNQKDTVLPRRAIEREEGQLQLCSRHRES). Residues 916 to 927 (VLPRRAIEREEG) are compositionally biased toward basic and acidic residues.

This sequence belongs to the glutamate-gated ion channel (TC 1.A.10.1) family. NR1/GRIN1 subfamily. As to quaternary structure, heterotetramer; the NMDAR subunits are modular and harbor tiered domains that function in concert to regulate opening and closing of the cation-selective ion channel pore. Forms heterotetrameric channels composed of two GluN1/zeta subunits (GRIN1), and two identical GluN2/epsilon subunits (GRIN2A, GRIN2B, GRIN2C or GRIN2D) or GluN3 subunits (GRIN3A or GRIN3B) (in vitro). Can also form heterotetrameric channels that contain at least two GluN1 subunits and at least two different GluN2 subunits (or a combination of one GluN2 and one GluN3 subunits) (in vitro). In vivo, the subunit composition may vary in function of the expression levels of the different subunits. Found in a complex with GRIN2A or GRIN2B, GRIN3A and PPP2CB. Found in a complex with GRIN2A or GRIN2B and GRIN3B. Interacts with SNX27 (via PDZ domain); the interaction is required for recycling to the plasma membrane when endocytosed and prevent degradation in lysosomes. Interacts with DLG4 and MPDZ. Interacts with LRFN1 and LRFN2. Interacts with MYZAP. Found in a complex with DLG4 and PRR7. Found in a complex with GRIN2B and PRR7. Interacts with PRR7; the interaction is reduced following NMDA receptor activity. In terms of processing, NMDA is probably regulated by C-terminal phosphorylation of an isoform of GRIN1 by PKC. Dephosphorylated on Ser-897 probably by protein phosphatase 2A (PPP2CB). Its phosphorylated state is influenced by the formation of the NMDAR-PPP2CB complex and the NMDAR channel activity.

It is found in the cell membrane. The protein resides in the postsynaptic cell membrane. Its subcellular location is the postsynaptic density membrane. The protein localises to the synaptic cell membrane. The enzyme catalyses Ca(2+)(in) = Ca(2+)(out). The catalysed reaction is Na(+)(in) = Na(+)(out). It carries out the reaction K(+)(in) = K(+)(out). With respect to regulation, NMDA glutamate receptor activity is inhbited by Mg2(+) in a voltage-dependent manner; Mg2(+)-induced blockade occurs only at negative potentials and decreases with membrane depolarization. 7-chlorokynurenate (50 uM) or Zn2(+) (100 uM) partially inhibit the NMDA glutamate receptor activity, while acide 2-amino-5-phosphonovalerique(100 uM) almost completely blocked the NMDA glutamate receptor activity. Dizocilpine (1 uM) results in long lasting and almost complete block of the NMDA glutamate receptor activity. Its function is as follows. Component of N-methyl-D-aspartate (NMDA) receptors (NMDARs) that function as heterotetrameric, ligand-gated cation channels with high calcium permeability and voltage-dependent block by Mg(2+). NMDARs participate in synaptic plasticity for learning and memory formation by contributing to the long-term potentiation (LTP). Channel activation requires binding of the neurotransmitter L-glutamate to the GluN2 subunit, glycine or D-serine binding to the GluN1 subunit, plus membrane depolarization to eliminate channel inhibition by Mg(2+). NMDARs mediate simultaneously the potasium efflux and the influx of calcium and sodium. Each GluN2 or GluN3 subunit confers differential attributes to channel properties, including activation, deactivation and desensitization kinetics, pH sensitivity, Ca2(+) permeability, and binding to allosteric modulators. The polypeptide is Glutamate receptor ionotropic, NMDA 1 (Homo sapiens (Human)).